Reading from the N-terminus, the 211-residue chain is Mediator of RNA polymerase II transcription subunit 20 (211 aa).

Belongs to the Mediator complex subunit 20 family. As to quaternary structure, component of the Mediator complex.

It localises to the nucleus. In terms of biological role, component of the Mediator complex, a coactivator involved in the regulated transcription of nearly all RNA polymerase II-dependent genes. Mediator functions as a bridge to convey information from gene-specific regulatory proteins to the basal RNA polymerase II transcription machinery. Mediator is recruited to promoters by direct interactions with regulatory proteins and serves as a scaffold for the assembly of a functional preinitiation complex with RNA polymerase II and the general transcription factors. The sequence is that of Mediator of RNA polymerase II transcription subunit 20 (MED20) from Gallus gallus (Chicken).